The sequence spans 622 residues: Low affinity potassium transport system protein Kup (622 aa).

Transmembrane regions (helical) follow at residues 9–29, 49–69, 101–121, 137–157, 165–185, 212–232, 247–267, 279–299, 337–357, 363–383, 397–417, and 419–439; these read LPAVTLAAIGVVYGDIGTSPL, VFGFLSLIFWLLVLVVSLKYL, VLVIMGLIGGSFFYGEVVITP, PSMDSYIVPLSIVVLTLLFII, VGKLFAPVMLIWFLTLGVLGA, AVSFFALGAVVLAITGVEALY, WFTVVLPSLVLNYFGQGALLL, LLAPDWALIPLMILATLATII, IYIPAINWMLYIAVVIVIVSF, LAAAYGIAVTGTMVITSILFC, AWVLLAGLLVIDVPMFLANVV, and ILSGGWLPLALGMVMFIIMTT.

The protein belongs to the HAK/KUP transporter (TC 2.A.72) family.

The protein resides in the cell inner membrane. The enzyme catalyses K(+)(in) + H(+)(in) = K(+)(out) + H(+)(out). Its function is as follows. Responsible for the low-affinity transport of potassium into the cell. Likely operates as a K(+):H(+) symporter. The polypeptide is Low affinity potassium transport system protein Kup (Pectobacterium carotovorum subsp. carotovorum (strain PC1)).